Consider the following 417-residue polypeptide: Putative UDP-arabinose 4-epimerase 2 (417 aa).

Topologically, residues 1–31 (MLNLGRARTGRQNRSMSFEGLDFADPKKNNN) are cytoplasmic. The chain crosses the membrane as a helical; Signal-anchor for type II membrane protein span at residues 32–54 (YMGKIVLVMTLTAMCILLLNQSP). The Lumenal segment spans residues 55-417 (TFNTPSVFSR…YGSSSLVSAY (363 aa)). Position 71 to 102 (71 to 102 (HVLVTGGAGYIGSHAALRLLKDSYRVTIVDNL)) interacts with NAD(+). Tyr-219 serves as the catalytic Proton acceptor.

This sequence belongs to the NAD(P)-dependent epimerase/dehydratase family. Requires NAD(+) as cofactor.

It is found in the golgi apparatus. Its subcellular location is the golgi stack membrane. The catalysed reaction is UDP-beta-L-arabinopyranose = UDP-alpha-D-xylose. Its pathway is nucleotide-sugar biosynthesis; UDP-L-arabinose biosynthesis; UDP-L-arabinose from UDP-alpha-D-xylose: step 1/1. It functions in the pathway cell wall biogenesis; cell wall polysaccharide biosynthesis. This chain is Putative UDP-arabinose 4-epimerase 2, found in Arabidopsis thaliana (Mouse-ear cress).